Reading from the N-terminus, the 264-residue chain is Thymidylate synthase (264 aa).

A dUMP-binding site is contributed by R21. Residue H51 participates in (6R)-5,10-methylene-5,6,7,8-tetrahydrofolate binding. 126–127 lines the dUMP pocket; the sequence is RR. Catalysis depends on C146, which acts as the Nucleophile. DUMP contacts are provided by residues 166–169, N177, and 207–209; these read RSAD and HLY. D169 contacts (6R)-5,10-methylene-5,6,7,8-tetrahydrofolate. Residue A263 participates in (6R)-5,10-methylene-5,6,7,8-tetrahydrofolate binding.

This sequence belongs to the thymidylate synthase family. Bacterial-type ThyA subfamily. In terms of assembly, homodimer.

It is found in the cytoplasm. It carries out the reaction dUMP + (6R)-5,10-methylene-5,6,7,8-tetrahydrofolate = 7,8-dihydrofolate + dTMP. The protein operates within pyrimidine metabolism; dTTP biosynthesis. Catalyzes the reductive methylation of 2'-deoxyuridine-5'-monophosphate (dUMP) to 2'-deoxythymidine-5'-monophosphate (dTMP) while utilizing 5,10-methylenetetrahydrofolate (mTHF) as the methyl donor and reductant in the reaction, yielding dihydrofolate (DHF) as a by-product. This enzymatic reaction provides an intracellular de novo source of dTMP, an essential precursor for DNA biosynthesis. The protein is Thymidylate synthase of Paramagnetospirillum magneticum (strain ATCC 700264 / AMB-1) (Magnetospirillum magneticum).